Here is a 257-residue protein sequence, read N- to C-terminus: tRNA pseudouridine synthase A (257 aa).

The active-site Nucleophile is Asp52. Residue Tyr111 coordinates substrate.

It belongs to the tRNA pseudouridine synthase TruA family. As to quaternary structure, homodimer.

The catalysed reaction is uridine(38/39/40) in tRNA = pseudouridine(38/39/40) in tRNA. Formation of pseudouridine at positions 38, 39 and 40 in the anticodon stem and loop of transfer RNAs. This chain is tRNA pseudouridine synthase A, found in Cereibacter sphaeroides (strain ATCC 17025 / ATH 2.4.3) (Rhodobacter sphaeroides).